The following is a 128-amino-acid chain: 3-aminoacrylate deaminase RutC (128 aa).

The protein belongs to the RutC family. In terms of assembly, homotrimer.

The enzyme catalyses (Z)-3-aminoacrylate + H2O + H(+) = 3-oxopropanoate + NH4(+). Functionally, involved in pyrimidine catabolism. Catalyzes the deamination of 3-aminoacrylate to malonic semialdehyde, a reaction that can also occur spontaneously. RutC may facilitate the reaction and modulate the metabolic fitness, rather than catalyzing essential functions. In Shigella flexneri serotype X (strain 2002017), this protein is 3-aminoacrylate deaminase RutC.